The chain runs to 155 residues: Small ribosomal subunit protein uS7cz/uS7cy (155 aa).

The protein belongs to the universal ribosomal protein uS7 family. Part of the 30S ribosomal subunit.

The protein resides in the plastid. The protein localises to the chloroplast. Functionally, one of the primary rRNA binding proteins, it binds directly to 16S rRNA where it nucleates assembly of the head domain of the 30S subunit. The sequence is that of Small ribosomal subunit protein uS7cz/uS7cy (rps7-A) from Ceratophyllum demersum (Rigid hornwort).